A 130-amino-acid polypeptide reads, in one-letter code: Small ribosomal subunit protein uS8 (130 aa).

The protein belongs to the universal ribosomal protein uS8 family. Part of the 30S ribosomal subunit.

Functionally, one of the primary rRNA binding proteins, it binds directly to 16S rRNA central domain where it helps coordinate assembly of the platform of the 30S subunit. The protein is Small ribosomal subunit protein uS8 of Methanobrevibacter smithii (strain ATCC 35061 / DSM 861 / OCM 144 / PS).